We begin with the raw amino-acid sequence, 271 residues long: Dermonecrotic toxin SpeSicTox-betaIF1 (271 aa).

The active site involves histidine 3. Positions 23 and 25 each coordinate Mg(2+). Histidine 39 serves as the catalytic Nucleophile. 2 disulfide bridges follow: cysteine 43/cysteine 49 and cysteine 45/cysteine 188. Aspartate 83 contacts Mg(2+).

It belongs to the arthropod phospholipase D family. Class II subfamily. Mg(2+) is required as a cofactor. In terms of tissue distribution, expressed by the venom gland.

It is found in the secreted. It carries out the reaction an N-(acyl)-sphingosylphosphocholine = an N-(acyl)-sphingosyl-1,3-cyclic phosphate + choline. The catalysed reaction is an N-(acyl)-sphingosylphosphoethanolamine = an N-(acyl)-sphingosyl-1,3-cyclic phosphate + ethanolamine. The enzyme catalyses a 1-acyl-sn-glycero-3-phosphocholine = a 1-acyl-sn-glycero-2,3-cyclic phosphate + choline. It catalyses the reaction a 1-acyl-sn-glycero-3-phosphoethanolamine = a 1-acyl-sn-glycero-2,3-cyclic phosphate + ethanolamine. In terms of biological role, dermonecrotic toxins cleave the phosphodiester linkage between the phosphate and headgroup of certain phospholipids (sphingolipid and lysolipid substrates), forming an alcohol (often choline) and a cyclic phosphate. This toxin acts on sphingomyelin (SM). It may also act on ceramide phosphoethanolamine (CPE), lysophosphatidylcholine (LPC) and lysophosphatidylethanolamine (LPE), but not on lysophosphatidylserine (LPS), and lysophosphatidylglycerol (LPG). It acts by transphosphatidylation, releasing exclusively cyclic phosphate products as second products. Induces dermonecrosis, hemolysis, increased vascular permeability, edema, inflammatory response, and platelet aggregation. This is Dermonecrotic toxin SpeSicTox-betaIF1 from Sicarius peruensis (Six-eyed sand spider).